A 655-amino-acid polypeptide reads, in one-letter code: NACHT, LRR and PYD domains-containing protein 10 (655 aa).

One can recognise a Pyrin domain in the interval 1–96 (MAMAKARKPR…VDQLSHICLH (96 aa)). Residues 167-484 (SLVVLQGSAG…AMSYLVKEDQ (318 aa)) form the NACHT domain. 173-180 (GSAGTGKT) serves as a coordination point for ATP. The span at 597 to 609 (QSQNLFSVKSSLS) shows a compositional bias: polar residues. A disordered region spans residues 597 to 655 (QSQNLFSVKSSLSHGPKEEQKCPSVHGQKEGKDNIAGTQKEASTGKGRGTEETPKNTYI). 2 stretches are compositionally biased toward basic and acidic residues: residues 611–629 (GPKE…EGKD) and 644–655 (RGTEETPKNTYI).

This sequence belongs to the NLRP family. As to quaternary structure, oligomerizes. Interacts with PYCARD. Also interacts with CASP1 and IL1B. Interacts with NOD1 and components of the NOD1 signaling pathway including RIPK2, NR2C2/TAK1 and IKBKG/NEMO. As to expression, highly expressed in basal and suprabasal epidermal cell layers with lower levels in dermal fibroblast cells (at protein level). Widely expressed with highest levels in heart, brain and skeletal muscle. Also expressed in liver, colon, dermis and epidermis. Little expression detected in myeloid cells or peripheral blood mononuclear cells.

The protein resides in the cytoplasm. Its subcellular location is the cell membrane. Inhibits autoprocessing of CASP1, CASP1-dependent IL1B secretion, PYCARD aggregation and PYCARD-mediated apoptosis but not apoptosis induced by FAS or BID. Displays anti-inflammatory activity. Required for immunity against C.albicans infection. Involved in the innate immune response by contributing to pro-inflammatory cytokine release in response to invasive bacterial infection. Contributes to T-cell-mediated inflammatory responses in the skin. Plays a role in protection against periodontitis through its involvement in induction of IL1A via ERK activation in oral epithelial cells infected with periodontal pathogens. Exhibits both ATPase and GTPase activities. This chain is NACHT, LRR and PYD domains-containing protein 10 (NLRP10), found in Homo sapiens (Human).